The chain runs to 399 residues: Stearoyl-[acyl-carrier-protein] 9-desaturase, chloroplastic (399 aa).

Over residues 1-12 the composition is skewed to polar residues; it reads MALNLNPVSTPF. The N-terminal 35 residues, 1–35, are a transit peptide targeting the chloroplast; it reads MALNLNPVSTPFQCRRLPSFSPRQTPSRRSPKFFM. The tract at residues 1–57 is disordered; sequence MALNLNPVSTPFQCRRLPSFSPRQTPSRRSPKFFMASTLSSSSPKEAESLKKPFSPP. Fe cation is bound by residues Glu141, Glu179, His182, Glu232, Glu265, and His268.

Belongs to the fatty acid desaturase type 2 family. In terms of assembly, homodimer. Fe(2+) is required as a cofactor.

It is found in the plastid. Its subcellular location is the chloroplast. The catalysed reaction is octadecanoyl-[ACP] + 2 reduced [2Fe-2S]-[ferredoxin] + O2 + 2 H(+) = (9Z)-octadecenoyl-[ACP] + 2 oxidized [2Fe-2S]-[ferredoxin] + 2 H2O. It participates in lipid metabolism; fatty acid metabolism. In terms of biological role, converts stearoyl-ACP to oleoyl-ACP by introduction of a cis double bond between carbons 9 and 10 of the acyl chain. The sequence is that of Stearoyl-[acyl-carrier-protein] 9-desaturase, chloroplastic from Spinacia oleracea (Spinach).